The sequence spans 433 residues: MGTIQTLPGTRDILPEEIGYWQYVETVATQILSRAMYYEIRPPIFEQTSLFERGIGEATDVVGKEMYTFSDRGDRSLTLRPEGTAGVVRAYLQNNLYAAGGVQRLWYCGPMFRYERPQAGRQRQFHQIGLELIGTADPRADVEVIALATDILKTLGLQSLKLDINSVGDRNDRQNYREALVNYFLPYKAELDTDSQDRLQRNPLRILDSKDKRTKEINQNAPSILEHLGDASKKHFDQVQQLLTDLGIEYNINPCLVRGLDYYTHTAFEMISDDLGAQATVCGGGRYDGLVEELGGNPTPAVGWAIGMERLIILLKQLQSSPDMTPDIYIVSRGEAAEGQGLILAQKLRKEGLTVELDMSGSAFGKQFKRADRSGAIACIVLGEEEATNKTVQLKWLQSKEQQAMTQAELLTKVGELIEQLDRHKRTMNHSTQ.

This sequence belongs to the class-II aminoacyl-tRNA synthetase family. In terms of assembly, homodimer.

Its subcellular location is the cytoplasm. The enzyme catalyses tRNA(His) + L-histidine + ATP = L-histidyl-tRNA(His) + AMP + diphosphate + H(+). This chain is Histidine--tRNA ligase, found in Crocosphaera subtropica (strain ATCC 51142 / BH68) (Cyanothece sp. (strain ATCC 51142)).